The following is a 174-amino-acid chain: Cell division protein FtsL (174 aa).

Over 1–38 (MLAAPRELSYIPQPVVSSKQSPRSGLSNRRRESRARQK) the chain is Cytoplasmic. A helical membrane pass occupies residues 39–59 (ILLLGLVLMGFVIGLSLTFLT). The Extracellular portion of the chain corresponds to 60-174 (MQVLIKGYKI…EPARQAGAGV (115 aa)).

This sequence belongs to the FtsL family.

The protein localises to the cell membrane. Essential cell division protein. The chain is Cell division protein FtsL from Moorella thermoacetica (strain ATCC 39073 / JCM 9320).